The chain runs to 453 residues: Potassium/proton antiporter CemA (453 aa).

A run of 4 helical transmembrane segments spans residues 235 to 255 (YMAC…IIFL), 328 to 348 (ICTI…ACLL), 378 to 398 (ILLL…EIII), and 414 to 434 (VSCF…YWIF).

This sequence belongs to the CemA family.

The protein resides in the plastid. It is found in the chloroplast inner membrane. The enzyme catalyses K(+)(in) + H(+)(out) = K(+)(out) + H(+)(in). Functionally, contributes to K(+)/H(+) antiport activity by supporting proton efflux to control proton extrusion and homeostasis in chloroplasts in a light-dependent manner to modulate photosynthesis. Prevents excessive induction of non-photochemical quenching (NPQ) under continuous-light conditions. Indirectly promotes efficient inorganic carbon uptake into chloroplasts. This is Potassium/proton antiporter CemA from Zygnema circumcarinatum (Green alga).